The following is a 376-amino-acid chain: Alcohol dehydrogenase 1 (376 aa).

The residue at position 2 (Ser-2) is an N-acetylserine. Residues Cys-47, His-68, Cys-98, Cys-101, Cys-104, Cys-112, and Cys-176 each coordinate Zn(2+). Residues 201-206 (GLGGVG), Asp-225, Lys-230, 294-296 (VGV), and Arg-371 contribute to the NAD(+) site.

The protein belongs to the zinc-containing alcohol dehydrogenase family. Class-I subfamily. Homodimer. Requires Zn(2+) as cofactor.

The protein resides in the cytoplasm. The enzyme catalyses a primary alcohol + NAD(+) = an aldehyde + NADH + H(+). It carries out the reaction a secondary alcohol + NAD(+) = a ketone + NADH + H(+). The chain is Alcohol dehydrogenase 1 (ADH1) from Gallus gallus (Chicken).